The following is a 338-amino-acid chain: DNA-directed RNA polymerase subunit alpha (338 aa).

Positions 1–234 are alpha N-terminal domain (alpha-NTD); sequence MIHKNWQELI…DQLSIFVNFD (234 aa). The alpha C-terminal domain (alpha-CTD) stretch occupies residues 250-338; the sequence is FNPLLLKKVD…ELAKKYEDNF (89 aa).

It belongs to the RNA polymerase alpha chain family. As to quaternary structure, homodimer. The RNAP catalytic core consists of 2 alpha, 1 beta, 1 beta' and 1 omega subunit. When a sigma factor is associated with the core the holoenzyme is formed, which can initiate transcription.

It catalyses the reaction RNA(n) + a ribonucleoside 5'-triphosphate = RNA(n+1) + diphosphate. Its function is as follows. DNA-dependent RNA polymerase catalyzes the transcription of DNA into RNA using the four ribonucleoside triphosphates as substrates. The chain is DNA-directed RNA polymerase subunit alpha from Jannaschia sp. (strain CCS1).